The chain runs to 336 residues: Holliday junction branch migration complex subunit RuvB (336 aa).

Residues alanine 4–tyrosine 184 are large ATPase domain (RuvB-L). ATP-binding positions include isoleucine 23, arginine 24, glycine 65, lysine 68, threonine 69, threonine 70, glutamate 131 to tyrosine 133, arginine 174, tyrosine 184, and arginine 221. Threonine 69 provides a ligand contact to Mg(2+). Residues glutamine 185–asparagine 255 are small ATPAse domain (RuvB-S). The interval alanine 258–proline 336 is head domain (RuvB-H). Arginine 294, arginine 313, and arginine 318 together coordinate DNA.

The protein belongs to the RuvB family. As to quaternary structure, homohexamer. Forms an RuvA(8)-RuvB(12)-Holliday junction (HJ) complex. HJ DNA is sandwiched between 2 RuvA tetramers; dsDNA enters through RuvA and exits via RuvB. An RuvB hexamer assembles on each DNA strand where it exits the tetramer. Each RuvB hexamer is contacted by two RuvA subunits (via domain III) on 2 adjacent RuvB subunits; this complex drives branch migration. In the full resolvosome a probable DNA-RuvA(4)-RuvB(12)-RuvC(2) complex forms which resolves the HJ.

The protein resides in the cytoplasm. It carries out the reaction ATP + H2O = ADP + phosphate + H(+). The RuvA-RuvB-RuvC complex processes Holliday junction (HJ) DNA during genetic recombination and DNA repair, while the RuvA-RuvB complex plays an important role in the rescue of blocked DNA replication forks via replication fork reversal (RFR). RuvA specifically binds to HJ cruciform DNA, conferring on it an open structure. The RuvB hexamer acts as an ATP-dependent pump, pulling dsDNA into and through the RuvAB complex. RuvB forms 2 homohexamers on either side of HJ DNA bound by 1 or 2 RuvA tetramers; 4 subunits per hexamer contact DNA at a time. Coordinated motions by a converter formed by DNA-disengaged RuvB subunits stimulates ATP hydrolysis and nucleotide exchange. Immobilization of the converter enables RuvB to convert the ATP-contained energy into a lever motion, pulling 2 nucleotides of DNA out of the RuvA tetramer per ATP hydrolyzed, thus driving DNA branch migration. The RuvB motors rotate together with the DNA substrate, which together with the progressing nucleotide cycle form the mechanistic basis for DNA recombination by continuous HJ branch migration. Branch migration allows RuvC to scan DNA until it finds its consensus sequence, where it cleaves and resolves cruciform DNA. This is Holliday junction branch migration complex subunit RuvB from Enterobacter sp. (strain 638).